The chain runs to 78 residues: Omega-conotoxin-like 2 (78 aa).

The first 22 residues, 1 to 22, serve as a signal peptide directing secretion; the sequence is MKLTCVVIVAVLLLTACQLITA. Residues 23–42 constitute a propeptide that is removed on maturation; that stretch reads DDSRGTQKHRSLRSTTKVSK. 3 cysteine pairs are disulfide-bonded: C46/C62, C53/C65, and C61/C72.

It belongs to the conotoxin O1 superfamily. As to expression, expressed by the venom duct.

The protein localises to the secreted. Its function is as follows. Omega-conotoxins act at presynaptic membranes, they bind and block voltage-gated calcium channels (Cav). The chain is Omega-conotoxin-like 2 from Conus striatus (Striated cone).